The sequence spans 333 residues: Putative transporter MamV (333 aa).

Helical transmembrane passes span 19–39, 86–106, 111–131, 170–190, and 191–211; these read AWLD…LGVL, FLSA…MLWY, LGSG…LISA, VLAG…LAAI, and LVSL…IHGL.

Belongs to the cation diffusion facilitator (CDF) transporter (TC 2.A.4) family.

Its subcellular location is the cell inner membrane. Expression of just the minimal mamAB gene cluster (amb0961 to amb0978), including this gene, is sufficient to form a minimal magnetosome chain with small magnetite particles. This chain is Putative transporter MamV, found in Paramagnetospirillum magneticum (strain ATCC 700264 / AMB-1) (Magnetospirillum magneticum).